Reading from the N-terminus, the 580-residue chain is Transcription factor coe2-B (580 aa).

The interval 60-63 (RKSN) is interaction with DNA. A C5-type zinc finger spans residues 148-167 (CRVLLTHEVMCSRCCEKKSC). 2 interaction with DNA regions span residues 194–201 (NCLKTAGN) and 233–236 (NNSK). The 83-residue stretch at 259–341 (PCIKAISPSE…CKGAPGRFIY (83 aa)) folds into the IPT/TIG domain. Residues 455-492 (IRNTSSISPRGYSSSSTPQQSNYSTPSNSMNGYSNVPM) are disordered. Low complexity predominate over residues 459–481 (SSISPRGYSSSSTPQQSNYSTPS). Polar residues predominate over residues 482–492 (NSMNGYSNVPM).

Belongs to the COE family. In embryos, expressed in precursors of primary neurons. In adults, expressed at high levels in the brain, and at low levels in the somatic muscles, testis, and possibly the spleen.

Its subcellular location is the nucleus. In terms of biological role, may play a pivotal role in the transcriptional cascade that specifies primary neurons in embryos. Stabilizes the higher neural potential of selected progenitor cells that express neurog2/X-ngnr-1 by maintaining Delta-Notch signaling. Thus ensures the transition between neural competence and irreversible commitment to a neural fate. Also promotes neuronal differentiation by activating neurod1 expression, directly or indirectly. This Xenopus laevis (African clawed frog) protein is Transcription factor coe2-B.